Consider the following 312-residue polypeptide: Putative HTH-type transcriptional regulatory protein TV0294 (312 aa).

The HTH cro/C1-type domain maps to 133–186; that stretch reads LRERRNELNLSIGNISSYLGVSRRSVSLYENGSAATIDIFIRLRNILKADIVDH. The H-T-H motif DNA-binding region spans 144–163; it reads IGNISSYLGVSRRSVSLYEN.

This chain is Putative HTH-type transcriptional regulatory protein TV0294, found in Thermoplasma volcanium (strain ATCC 51530 / DSM 4299 / JCM 9571 / NBRC 15438 / GSS1).